The primary structure comprises 91 residues: Elongation factor 1-beta (91 aa).

Belongs to the EF-1-beta/EF-1-delta family.

Functionally, promotes the exchange of GDP for GTP in EF-1-alpha/GDP, thus allowing the regeneration of EF-1-alpha/GTP that could then be used to form the ternary complex EF-1-alpha/GTP/AAtRNA. In Saccharolobus islandicus (strain Y.N.15.51 / Yellowstone #2) (Sulfolobus islandicus), this protein is Elongation factor 1-beta.